Here is a 166-residue protein sequence, read N- to C-terminus: MSKVMETKQQVVTEIADKLRASKSTIVVDYRGLTVSEATELRKQLREAGVEFKVYKNSLTRRAAESAEMAELNEFLTGPNAIAFSNEDVVAPAKVLNDFAKDHEALEIKAGVIEGKLVTLDEVKAIATLPSREGLLSMLLSVLQAPIRNLALATKAVADQKEEQGA.

This sequence belongs to the universal ribosomal protein uL10 family. Part of the ribosomal stalk of the 50S ribosomal subunit. The N-terminus interacts with L11 and the large rRNA to form the base of the stalk. The C-terminus forms an elongated spine to which L12 dimers bind in a sequential fashion forming a multimeric L10(L12)X complex.

Functionally, forms part of the ribosomal stalk, playing a central role in the interaction of the ribosome with GTP-bound translation factors. The polypeptide is Large ribosomal subunit protein uL10 (Bacillus cereus (strain ATCC 14579 / DSM 31 / CCUG 7414 / JCM 2152 / NBRC 15305 / NCIMB 9373 / NCTC 2599 / NRRL B-3711)).